A 259-amino-acid polypeptide reads, in one-letter code: Tumor necrosis factor receptor superfamily member 10C (259 aa).

An N-terminal signal peptide occupies residues 1 to 25; it reads MARIPKTLKFVVVIVAVLLPVLAYS. TNFR-Cys repeat units lie at residues 29 to 66, 69 to 109, and 110 to 149; these read ARQEEVPQQTVAPQQQRHSFKGEECPAGSHRSEHTGAC, CTEG…DTVC, and QCKEGTFRNENSPEMCRKCSRCPSGEVQVSNCTSWDDIQC. Polar residues predominate over residues 30–45; sequence RQEEVPQQTVAPQQQR. The segment at 30 to 56 is disordered; the sequence is RQEEVPQQTVAPQQQRHSFKGEECPAG. Cystine bridges form between Cys-53/Cys-66, Cys-69/Cys-85, Cys-88/Cys-101, Cys-91/Cys-109, Cys-111/Cys-125, Cys-128/Cys-141, and Cys-131/Cys-149. Residue Asn-77 is glycosylated (N-linked (GlcNAc...) (high mannose) asparagine). 2 N-linked (GlcNAc...) (high mannose) asparagine glycosylation sites follow: Asn-140 and Asn-156. The segment at 160-224 is disordered; sequence ETPAAEETMN…TSPGTPAPAA (65 aa). 5 TAPE repeats span residues 162 to 176, 177 to 191, 192 to 206, 207 to 221, and 222 to 236; these read PAAEETMNTSPGTPA, PAAEETMTTSPGTPA, and PAAEETMITSPGTPA. Over residues 185–217 the composition is skewed to low complexity; that stretch reads TSPGTPAPAAEETMTTSPGTPAPAAEETMTTSP. Residue Ala-236 is the site of GPI-anchor amidated alanine attachment. Residues 237 to 259 constitute a propeptide, removed in mature form; it reads SSHYLSCTIVGIIVLIVLLIVFV.

Post-translationally, N-glycosylated and O-glycosylated. In terms of tissue distribution, higher expression in normal tissues than in tumor cell lines. Highly expressed in peripheral blood lymphocytes, spleen, skeletal muscle, placenta, lung and heart.

Its subcellular location is the cell membrane. In terms of biological role, receptor for the cytotoxic ligand TRAIL. Lacks a cytoplasmic death domain and hence is not capable of inducing apoptosis. May protect cells against TRAIL mediated apoptosis by competing with TRAIL-R1 and R2 for binding to the ligand. The protein is Tumor necrosis factor receptor superfamily member 10C (TNFRSF10C) of Homo sapiens (Human).